The primary structure comprises 173 residues: Crossover junction endodeoxyribonuclease RuvC (173 aa).

Residues Asp8, Glu67, and Asp139 contribute to the active site. Mg(2+)-binding residues include Asp8, Glu67, and Asp139.

It belongs to the RuvC family. Homodimer which binds Holliday junction (HJ) DNA. The HJ becomes 2-fold symmetrical on binding to RuvC with unstacked arms; it has a different conformation from HJ DNA in complex with RuvA. In the full resolvosome a probable DNA-RuvA(4)-RuvB(12)-RuvC(2) complex forms which resolves the HJ. It depends on Mg(2+) as a cofactor.

Its subcellular location is the cytoplasm. It catalyses the reaction Endonucleolytic cleavage at a junction such as a reciprocal single-stranded crossover between two homologous DNA duplexes (Holliday junction).. Functionally, the RuvA-RuvB-RuvC complex processes Holliday junction (HJ) DNA during genetic recombination and DNA repair. Endonuclease that resolves HJ intermediates. Cleaves cruciform DNA by making single-stranded nicks across the HJ at symmetrical positions within the homologous arms, yielding a 5'-phosphate and a 3'-hydroxyl group; requires a central core of homology in the junction. The consensus cleavage sequence is 5'-(A/T)TT(C/G)-3'. Cleavage occurs on the 3'-side of the TT dinucleotide at the point of strand exchange. HJ branch migration catalyzed by RuvA-RuvB allows RuvC to scan DNA until it finds its consensus sequence, where it cleaves and resolves the cruciform DNA. The sequence is that of Crossover junction endodeoxyribonuclease RuvC from Shewanella putrefaciens (strain CN-32 / ATCC BAA-453).